A 538-amino-acid chain; its full sequence is Efflux pump radE (538 aa).

Composition is skewed to basic and acidic residues over residues 1–12 (MATSRDFGREPP), 20–35 (EAGH…VSEH), and 65–74 (DPKEEERDPN). Disordered stretches follow at residues 1-35 (MATS…VSEH) and 65-90 (DPKE…PQNW). The next 12 membrane-spanning stretches (helical) occupy residues 100–120 (AVLS…APGI), 134–154 (LATF…LVLA), 163–183 (VVIY…CALS), 194–214 (FLCG…IADL), 225–245 (SVWS…GGFL), 253–273 (WIFW…LLVL), 327–347 (PICL…YFMI), 362–382 (EGIV…GVVV), 409–429 (IPPT…YGWT), 436–456 (WAVP…INIS), 482–502 (IFGA…GLGW), and 505–525 (SLLA…FYYG).

This sequence belongs to the major facilitator superfamily.

It localises to the cell membrane. In terms of biological role, efflux pump that might be required for efficient secretion of radicicol or other secondary metabolies produced by the radicicol gene cluster. The protein is Efflux pump radE of Floropilus chiversii (Chaetomium chiversii).